Here is a 320-residue protein sequence, read N- to C-terminus: Cytochrome f (320 aa).

An N-terminal signal peptide occupies residues 1 to 32 (MKTKKSYDKVTRWVTPPILMLIIIHIITGACS). Positions 36, 56, 59, and 60 each coordinate heme. Residues 286–306 (IQGLLGFLASVVLAQIFLVLK) traverse the membrane as a helical segment.

It belongs to the cytochrome f family. As to quaternary structure, the 4 large subunits of the cytochrome b6-f complex are cytochrome b6, subunit IV (17 kDa polypeptide, petD), cytochrome f and the Rieske protein, while the 4 small subunits are PetG, PetL, PetM and PetN. The complex functions as a dimer. Heme serves as cofactor.

The protein resides in the plastid. It localises to the chloroplast thylakoid membrane. Functionally, component of the cytochrome b6-f complex, which mediates electron transfer between photosystem II (PSII) and photosystem I (PSI), cyclic electron flow around PSI, and state transitions. This is Cytochrome f from Gnetum parvifolium (Small-leaved jointfir).